The sequence spans 397 residues: MPRALKILVIGMFINVTGASFLWPLNTIYIHNHLGKSLTVAGLVLMLNSGASVAGNLCGGFLFDKIGGFKSIMLGIAITLASLMGLVFFHDWPAYIVLLTIVGFGSGVVFPASYAMAGSVWPEGGRKAFNAIYVAQNAGVAVGSALGGVVASFSFSYVFLANAVLYLIFFFIVYFGFRNIQTGDASQTSVLDYDAVNSKAKFAALIILSGGYVLGWLAYSQWSTTIASYTQSIGISLSLYSVLWTVNGILIVLGQPLVSFVVKKWAESLKAQMVIGFIIFIVSFSMLLTAKQFPMFLAAMVILTIGEMLVWPAVPTIANQLAPKGKEGFYQGFVNSAATGGRMIGPLFGGVLVDHYGIRALVLSLLVLLLISIATTLLYDKRIKSAKETNKQASISS.

A run of 12 helical transmembrane segments spans residues 5–25 (LKILVIGMFINVTGASFLWPL), 43–63 (LVLMLNSGASVAGNLCGGFLF), 69–89 (FKSIMLGIAITLASLMGLVFF), 92–112 (WPAYIVLLTIVGFGSGVVFPA), 131–151 (AIYVAQNAGVAVGSALGGVVA), 157–177 (YVFLANAVLYLIFFFIVYFGF), 202–222 (FAALIILSGGYVLGWLAYSQW), 233–253 (IGISLSLYSVLWTVNGILIVL), 269–289 (LKAQMVIGFIIFIVSFSMLLT), 293–313 (FPMFLAAMVILTIGEMLVWPA), 333–353 (FVNSAATGGRMIGPLFGGVLV), and 360–380 (ALVLSLLVLLLISIATTLLYD).

Belongs to the major facilitator superfamily.

The protein localises to the cell membrane. This is an uncharacterized protein from Bacillus subtilis (strain 168).